The sequence spans 432 residues: Polyamine export protein (432 aa).

The CNNM transmembrane domain occupies 1–201; the sequence is MIMELFHTIL…AEAGVLKTQE (201 aa). 4 helical membrane-spanning segments follow: residues 2–22, 61–81, 100–120, and 138–158; these read IMEL…SAVV, FITV…GIGE, WIAP…FILF, and LSVV…VWFF. CBS domains follow at residues 220 to 279 and 286 to 345; these read MTTR…NENV and LLRK…SNEE.

The protein belongs to the UPF0053 family. PaeA subfamily.

The protein localises to the cell inner membrane. In terms of biological role, involved in cadaverine and putrescine tolerance in stationary phase. May facilitate the efflux of both cadaverine and putrescine from the cytoplasm, reducing potentially toxic levels under certain stress conditions. This chain is Polyamine export protein, found in Haemophilus influenzae (strain ATCC 51907 / DSM 11121 / KW20 / Rd).